The chain runs to 156 residues: Transcriptional repressor NrdR (156 aa).

Residues 3–34 (CPSCQFNGTRVVDSRPVDDNKEIRRRRECESC) fold into a zinc finger. The ATP-cone domain maps to 49–139 (LVVVKKEGSR…VYRQFKDINV (91 aa)).

The protein belongs to the NrdR family. Requires Zn(2+) as cofactor.

Negatively regulates transcription of bacterial ribonucleotide reductase nrd genes and operons by binding to NrdR-boxes. This chain is Transcriptional repressor NrdR, found in Lysinibacillus sphaericus (strain C3-41).